Consider the following 441-residue polypeptide: MKKLASLQFFNLKLLLNGESSRGFSKFKKNYKLKAELGRGGFGVVYRAVRTCDNALVAVKFIERSNVKEWARINGEQVPMEICMLAKCSKVRGVIRLLDWYSIPEGFLIVMERPYPCIDMFDFIKGQGKISEDMARFLFRQIAVTVHECVQNRVLHRDLKDENIVIDLVTGSTKLIDFGAATVLRRSQYSDFQGTRLYCPPEWFLHSLYLGREAAVWSLGVLLYNSLNGRLPFRNEKDICTAHLLGPLPFFVPVSAEVKDLISKCLTFDPFQRCSLEAILNHPWVKQQTLSWDALTKNKVQKKTSESSDDHHSETLGDHSETEEDRSPPTSSVSQQPGSADEGVGLSASSSNTHNQKKPNHKEFRMAKTSLLAPPTSIEMKAAVQASKTPTQFNVHTALKNQRQIKKHHSPQPPNSTVLTALRRAMSREAQNRISGVFSQD.

Residues 31–285 (YKLKAELGRG…LEAILNHPWV (255 aa)) form the Protein kinase domain. ATP contacts are provided by residues 37–45 (LGRGGFGVV) and K60. D158 serves as the catalytic Proton acceptor. The interval 301 to 364 (QKKTSESSDD…NQKKPNHKEF (64 aa)) is disordered. A compositionally biased stretch (basic and acidic residues) spans 303–320 (KTSESSDDHHSETLGDHS). Over residues 328–338 (PPTSSVSQQPG) the composition is skewed to polar residues.

It belongs to the protein kinase superfamily. Ser/Thr protein kinase family. PIM subfamily. Requires Mg(2+) as cofactor.

The enzyme catalyses L-seryl-[protein] + ATP = O-phospho-L-seryl-[protein] + ADP + H(+). It carries out the reaction L-threonyl-[protein] + ATP = O-phospho-L-threonyl-[protein] + ADP + H(+). Functionally, involved in the negative regulation of synaptic differentiation in PLM neurons. The polypeptide is Serine/threonine-protein kinase prk-2 (Caenorhabditis elegans).